The chain runs to 37 residues: Large ribosomal subunit protein bL36 (37 aa).

The protein belongs to the bacterial ribosomal protein bL36 family.

The sequence is that of Large ribosomal subunit protein bL36 from Clostridium kluyveri (strain NBRC 12016).